The following is a 338-amino-acid chain: Tetraacyldisaccharide 4'-kinase (338 aa).

67–74 (IAGGAGKT) contacts ATP.

The protein belongs to the LpxK family.

It catalyses the reaction a lipid A disaccharide + ATP = a lipid IVA + ADP + H(+). The protein operates within glycolipid biosynthesis; lipid IV(A) biosynthesis; lipid IV(A) from (3R)-3-hydroxytetradecanoyl-[acyl-carrier-protein] and UDP-N-acetyl-alpha-D-glucosamine: step 6/6. Its function is as follows. Transfers the gamma-phosphate of ATP to the 4'-position of a tetraacyldisaccharide 1-phosphate intermediate (termed DS-1-P) to form tetraacyldisaccharide 1,4'-bis-phosphate (lipid IVA). This is Tetraacyldisaccharide 4'-kinase from Acidovorax sp. (strain JS42).